The sequence spans 242 residues: Biosynthetic peptidoglycan transglycosylase (242 aa).

Residues 19–39 (LMVVLAVFWGGGIALFSVAPV) form a helical membrane-spanning segment.

The protein belongs to the glycosyltransferase 51 family.

It localises to the cell inner membrane. It carries out the reaction [GlcNAc-(1-&gt;4)-Mur2Ac(oyl-L-Ala-gamma-D-Glu-L-Lys-D-Ala-D-Ala)](n)-di-trans,octa-cis-undecaprenyl diphosphate + beta-D-GlcNAc-(1-&gt;4)-Mur2Ac(oyl-L-Ala-gamma-D-Glu-L-Lys-D-Ala-D-Ala)-di-trans,octa-cis-undecaprenyl diphosphate = [GlcNAc-(1-&gt;4)-Mur2Ac(oyl-L-Ala-gamma-D-Glu-L-Lys-D-Ala-D-Ala)](n+1)-di-trans,octa-cis-undecaprenyl diphosphate + di-trans,octa-cis-undecaprenyl diphosphate + H(+). Its pathway is cell wall biogenesis; peptidoglycan biosynthesis. Functionally, peptidoglycan polymerase that catalyzes glycan chain elongation from lipid-linked precursors. In Escherichia coli (strain 55989 / EAEC), this protein is Biosynthetic peptidoglycan transglycosylase.